We begin with the raw amino-acid sequence, 515 residues long: ATP synthase subunit alpha (515 aa).

Position 171-178 (171-178) interacts with ATP; the sequence is GDRQTGKT.

The protein belongs to the ATPase alpha/beta chains family. F-type ATPases have 2 components, CF(1) - the catalytic core - and CF(0) - the membrane proton channel. CF(1) has five subunits: alpha(3), beta(3), gamma(1), delta(1), epsilon(1). CF(0) has three main subunits: a(1), b(2) and c(9-12). The alpha and beta chains form an alternating ring which encloses part of the gamma chain. CF(1) is attached to CF(0) by a central stalk formed by the gamma and epsilon chains, while a peripheral stalk is formed by the delta and b chains.

The protein resides in the cell inner membrane. It catalyses the reaction ATP + H2O + 4 H(+)(in) = ADP + phosphate + 5 H(+)(out). Produces ATP from ADP in the presence of a proton gradient across the membrane. The alpha chain is a regulatory subunit. The sequence is that of ATP synthase subunit alpha from Xylella fastidiosa (strain Temecula1 / ATCC 700964).